Here is a 353-residue protein sequence, read N- to C-terminus: Mitochondrial import inner membrane translocase subunit TIM50 (353 aa).

Residues 1 to 21 (MAASAALFSRLRSGLRVGARG) constitute a mitochondrion transit peptide. Over 22–65 (LCTRLAPPPPRTPEQVTEIANRGGSKAQGPQHQPGSEGPSYAKK) the chain is Mitochondrial matrix. The disordered stretch occupies residues 24–59 (TRLAPPPPRTPEQVTEIANRGGSKAQGPQHQPGSEG). The chain crosses the membrane as a helical span at residues 66-86 (IALWIAGLLGAGGTVSIVYIF). At 87–353 (GNNPVDENGT…SRLWPRSKQP (267 aa)) the chain is on the mitochondrial intermembrane side. Residues 143-286 (YYQPPYTLVL…LDLSAFLKTI (144 aa)) enclose the FCP1 homology domain. Residue serine 341 is modified to Phosphoserine.

The protein belongs to the TIM50 family. As to quaternary structure, component of the TIM23 complex at least composed of TIMM23, TIMM17 (TIMM17A or TIMM17B) and TIMM50; within this complex, directly interacts with TIMM23. The complex interacts with the TIMM44 component of the PAM complex and with DNAJC15.

It is found in the mitochondrion inner membrane. Its function is as follows. Essential component of the TIM23 complex, a complex that mediates the translocation of transit peptide-containing proteins across the mitochondrial inner membrane. Has some phosphatase activity in vitro; however such activity may not be relevant in vivo. The sequence is that of Mitochondrial import inner membrane translocase subunit TIM50 (Timm50) from Mus musculus (Mouse).